The sequence spans 406 residues: Argininosuccinate synthase (406 aa).

ATP contacts are provided by residues 11–19 (AYSGGLDTS) and A38. Positions 91 and 96 each coordinate L-citrulline. G121 serves as a coordination point for ATP. T123, N127, and D128 together coordinate L-aspartate. N127 is a binding site for L-citrulline. Residues R131, S181, S190, E266, and Y278 each contribute to the L-citrulline site.

Belongs to the argininosuccinate synthase family. Type 1 subfamily. As to quaternary structure, homotetramer.

Its subcellular location is the cytoplasm. The enzyme catalyses L-citrulline + L-aspartate + ATP = 2-(N(omega)-L-arginino)succinate + AMP + diphosphate + H(+). The protein operates within amino-acid biosynthesis; L-arginine biosynthesis; L-arginine from L-ornithine and carbamoyl phosphate: step 2/3. In Campylobacter jejuni subsp. doylei (strain ATCC BAA-1458 / RM4099 / 269.97), this protein is Argininosuccinate synthase.